We begin with the raw amino-acid sequence, 273 residues long: Dermonecrotic toxin LhSicTox-alphaIA2av (273 aa).

H5 is a catalytic residue. Mg(2+) contacts are provided by E25 and D27. H41 acts as the Nucleophile in catalysis. Disulfide bonds link C45/C51 and C47/C190. D85 contacts Mg(2+).

It belongs to the arthropod phospholipase D family. Class II subfamily. The cofactor is Mg(2+). As to expression, expressed by the venom gland.

The protein localises to the secreted. The enzyme catalyses an N-(acyl)-sphingosylphosphocholine = an N-(acyl)-sphingosyl-1,3-cyclic phosphate + choline. It catalyses the reaction an N-(acyl)-sphingosylphosphoethanolamine = an N-(acyl)-sphingosyl-1,3-cyclic phosphate + ethanolamine. The catalysed reaction is a 1-acyl-sn-glycero-3-phosphocholine = a 1-acyl-sn-glycero-2,3-cyclic phosphate + choline. It carries out the reaction a 1-acyl-sn-glycero-3-phosphoethanolamine = a 1-acyl-sn-glycero-2,3-cyclic phosphate + ethanolamine. Functionally, dermonecrotic toxins cleave the phosphodiester linkage between the phosphate and headgroup of certain phospholipids (sphingolipid and lysolipid substrates), forming an alcohol (often choline) and a cyclic phosphate. This toxin acts on sphingomyelin (SM). It may also act on ceramide phosphoethanolamine (CPE), lysophosphatidylcholine (LPC) and lysophosphatidylethanolamine (LPE), but not on lysophosphatidylserine (LPS), and lysophosphatidylglycerol (LPG). It acts by transphosphatidylation, releasing exclusively cyclic phosphate products as second products. Induces dermonecrosis, hemolysis, increased vascular permeability, edema, inflammatory response, and platelet aggregation. In Loxosceles hirsuta (Recluse spider), this protein is Dermonecrotic toxin LhSicTox-alphaIA2av.